The sequence spans 512 residues: Apolipoprotein N-acyltransferase (512 aa).

A run of 6 helical transmembrane segments spans residues 5–25 (LDKY…FAAA), 56–76 (FAVS…FYWI), 92–112 (VPLT…CFWL), 118–138 (LPRG…TEFA), 168–188 (LGGI…LVLA), and 195–215 (SGKR…GYTA). Positions 233–477 (LQGNIDQTLK…ETVLEGHIKG (245 aa)) constitute a CN hydrolase domain. The active-site Proton acceptor is Glu-271. Lys-337 is a catalytic residue. The active-site Nucleophile is Cys-389. Residues 487-507 (TGSSWWLMGILALAALILFIF) form a helical membrane-spanning segment.

The protein belongs to the CN hydrolase family. Apolipoprotein N-acyltransferase subfamily.

The protein resides in the cell inner membrane. It carries out the reaction N-terminal S-1,2-diacyl-sn-glyceryl-L-cysteinyl-[lipoprotein] + a glycerophospholipid = N-acyl-S-1,2-diacyl-sn-glyceryl-L-cysteinyl-[lipoprotein] + a 2-acyl-sn-glycero-3-phospholipid + H(+). It participates in protein modification; lipoprotein biosynthesis (N-acyl transfer). Functionally, catalyzes the phospholipid dependent N-acylation of the N-terminal cysteine of apolipoprotein, the last step in lipoprotein maturation. The sequence is that of Apolipoprotein N-acyltransferase from Neisseria meningitidis serogroup B (strain ATCC BAA-335 / MC58).